We begin with the raw amino-acid sequence, 79 residues long: MRLSIRAIVLFALVWIGLLMSGYGVLVGSKVNAAGLVLQCHYLTARGTSTAQYLHTNSGIIGFSDCPIFRKIATVVDNG.

The first 33 residues, 1–33 (MRLSIRAIVLFALVWIGLLMSGYGVLVGSKVNA), serve as a signal peptide directing secretion.

This is an uncharacterized protein from Salmonella paratyphi A (strain ATCC 9150 / SARB42).